The chain runs to 494 residues: Folate-biopterin transporter (494 aa).

A run of 12 helical transmembrane segments spans residues 31–51 (APSW…VLGL), 64–84 (LGLS…PWIL), 104–124 (SYLW…AAWV), 133–153 (VLLF…SLVV), 170–190 (LTWG…GALL), 197–217 (TVFA…FLIS), 246–266 (ILLP…ESAF), 284–303 (VRLV…QRFL), 310–330 (VIMG…LILI), 346–366 (LGDS…VLVL), 375–395 (IEAT…VLSF), and 415–435 (LALL…FLGL). The segment at 441 to 461 (PQVKDKTEKEDNPDDPGDRLV) is disordered.

This sequence belongs to the major facilitator superfamily. Folate-biopterin transporter (TC 2.A.71) family.

The protein resides in the cell membrane. Its function is as follows. Mediates folate monoglutamate transport involved in tetrahydrofolate biosynthesis. It also mediates transport of antifolates, such as methotrexate and aminopterin. In Synechocystis sp. (strain ATCC 27184 / PCC 6803 / Kazusa), this protein is Folate-biopterin transporter.